Consider the following 152-residue polypeptide: Endoribonuclease YbeY (152 aa).

Residues histidine 116, histidine 120, and histidine 126 each contribute to the Zn(2+) site.

This sequence belongs to the endoribonuclease YbeY family. Zn(2+) is required as a cofactor.

It is found in the cytoplasm. Its function is as follows. Single strand-specific metallo-endoribonuclease involved in late-stage 70S ribosome quality control and in maturation of the 3' terminus of the 16S rRNA. This Mycoplasma mobile (strain ATCC 43663 / 163K / NCTC 11711) (Mesomycoplasma mobile) protein is Endoribonuclease YbeY.